Reading from the N-terminus, the 445-residue chain is 23S rRNA (uracil(1939)-C(5))-methyltransferase RlmD (445 aa).

The 59-residue stretch at 12–70 (SKQLSSKLSLNVTQLDHLGAGIAHHQGKIVFINGALPGETVQVQLTEQKKKFSRAKLLK) folds into the TRAM domain. Cys-83, Cys-89, Cys-92, and Cys-171 together coordinate [4Fe-4S] cluster. The S-adenosyl-L-methionine site is built by Gln-278, Phe-307, Asn-312, Glu-328, Asp-355, and Asp-375. The active-site Nucleophile is the Cys-401.

This sequence belongs to the class I-like SAM-binding methyltransferase superfamily. RNA M5U methyltransferase family. RlmD subfamily.

The enzyme catalyses uridine(1939) in 23S rRNA + S-adenosyl-L-methionine = 5-methyluridine(1939) in 23S rRNA + S-adenosyl-L-homocysteine + H(+). Functionally, catalyzes the formation of 5-methyl-uridine at position 1939 (m5U1939) in 23S rRNA. The protein is 23S rRNA (uracil(1939)-C(5))-methyltransferase RlmD of Shewanella piezotolerans (strain WP3 / JCM 13877).